A 176-amino-acid polypeptide reads, in one-letter code: MSRVGKSPIALQGAEVKLADGSITVKGPLGTITQAVNPLVNVANNDGTLNLSPVDDSREANALSGTMRAIIANMVQGVTKGFERKLTLVGVGYRAQAQGDKLNLSLGFSHPVVHQMPEGIKAETPTQTEIVIKGIDKQKVGQVAAEVRGYRPPEPYKGKGVRYADEVVILKETKKK.

This sequence belongs to the universal ribosomal protein uL6 family. In terms of assembly, part of the 50S ribosomal subunit.

In terms of biological role, this protein binds to the 23S rRNA, and is important in its secondary structure. It is located near the subunit interface in the base of the L7/L12 stalk, and near the tRNA binding site of the peptidyltransferase center. This Burkholderia thailandensis (strain ATCC 700388 / DSM 13276 / CCUG 48851 / CIP 106301 / E264) protein is Large ribosomal subunit protein uL6.